The primary structure comprises 242 residues: MATDELASKLSRRLQMEGEGGGEAPEQPGLNGAAAAAAAAGAPDETAEALGSADEELSAKLLRRADLNQGIGEPQSPSRRVFNPYTEFKEFSRKQIKDMEKMFKEYDAGRDGFIDLMELKLMMEKLGAPQTHLGLKNMIKEVDEDFDSKLSFREFLLIFRKAAAGELQEDSGLHVLARLSEIDVSTEGVKGAKSFFEAKVQAMNVSSRFEEEIKAEQEERKKQAEEMKQRKAAFKELQSTFK.

The tract at residues 1–53 (MATDELASKLSRRLQMEGEGGGEAPEQPGLNGAAAAAAAAGAPDETAEALGSA) is disordered. Residue alanine 2 is modified to N-acetylalanine. Position 11 is a phosphoserine (serine 11). Residues 32–42 (GAAAAAAAAGA) show a composition bias toward low complexity. Phosphoserine occurs at positions 76 and 78. Residue tyrosine 85 is modified to Phosphotyrosine. EF-hand domains are found at residues 94 to 129 (KQIKDMEKMFKEYDAGRDGFIDLMELKLMMEKLGAP) and 130 to 165 (QTHLGLKNMIKEVDEDFDSKLSFREFLLIFRKAAAG). Positions 107, 111, 118, 143, 145, 147, 149, and 154 each coordinate Ca(2+). Lysine 235 bears the N6-acetyllysine mark.

As to quaternary structure, interacts with CASP9; with inactive form.

The protein resides in the membrane raft. May regulate B-cell receptor (BCR)-induced immature and primary B-cell apoptosis. Plays a role as negative regulator of the canonical NF-kappa-B-activating branch. Controls spontaneous apoptosis through the regulation of BCL2L1 abundance. This Bos taurus (Bovine) protein is EF-hand domain-containing protein D2 (EFHD2).